We begin with the raw amino-acid sequence, 282 residues long: UDP-3-O-acyl-N-acetylglucosamine deacetylase (282 aa).

Residues histidine 80, histidine 240, and aspartate 244 each contribute to the Zn(2+) site. Histidine 267 acts as the Proton donor in catalysis.

Belongs to the LpxC family. Zn(2+) is required as a cofactor.

It localises to the plastid. It is found in the chloroplast. The catalysed reaction is a UDP-3-O-[(3R)-3-hydroxyacyl]-N-acetyl-alpha-D-glucosamine + H2O = a UDP-3-O-[(3R)-3-hydroxyacyl]-alpha-D-glucosamine + acetate. The protein operates within glycolipid biosynthesis; lipid IV(A) biosynthesis; lipid IV(A) from (3R)-3-hydroxytetradecanoyl-[acyl-carrier-protein] and UDP-N-acetyl-alpha-D-glucosamine: step 2/6. Its function is as follows. Catalyzes the hydrolysis of UDP-3-O-myristoyl-N-acetylglucosamine to form UDP-3-O-myristoylglucosamine and acetate. Involved in the biosynthesis of lipid A, a phosphorylated glycolipid that in bacteria anchors the lipopolysaccharide to the outer membrane of the cell. The target for the lipopolysaccharides produced in the chloroplast could either be the cell envelope of the eukaryote or the plastid membrane. This Cyanidium caldarium (Red alga) protein is UDP-3-O-acyl-N-acetylglucosamine deacetylase.